Consider the following 292-residue polypeptide: Cholesterol ring-cleaving hydrolase IpdA subunit (292 aa).

The protein belongs to the 3-oxoacid CoA-transferase subunit A family. In terms of assembly, heterotetramer composed of 2 IpdA subunits and 2 IpdB subunits.

The enzyme catalyses (3E)-2-(2-carboxylatoethyl)-3-methyl-6-oxocyclohex-1-ene-1-carboxyl-CoA + H2O = 6-methyl-3,7-dioxodecanedioyl-CoA. It functions in the pathway steroid metabolism; cholesterol degradation. Involved in the final steps of cholesterol and steroid degradation. Opens the last steroid ring of cholesterol by catalyzing the hydrolysis of (3E)-2-(2-carboxylatoethyl)-3-methyl-6-oxocyclohex-1-ene-1-carboxyl-CoA (COCHEA-CoA) to 6-methyl-3,7-dioxodecanedioyl-CoA (MeDODA-CoA). This Mycobacterium tuberculosis (strain CDC 1551 / Oshkosh) protein is Cholesterol ring-cleaving hydrolase IpdA subunit.